The sequence spans 1132 residues: Myosin-binding protein C, fast-type (1132 aa).

The segment at 1 to 59 (MPEPSKAAPKKEAKKKEEKKEEKKEAPPPQEHKDEAPDDVHPPETPDPEGLFLSKPQNV) is disordered. Positions 9-44 (PKKEAKKKEEKKEEKKEAPPPQEHKDEAPDDVHPPE) are enriched in basic and acidic residues. 5 consecutive Ig-like C2-type domains span residues 48-149 (PEGL…SIDV), 249-338 (SEAF…VKEP), 339-429 (PVTV…VEEK), 430-530 (QLEV…KQEP), and 531-630 (PKIH…VVDV). Fibronectin type-III domains lie at 633 to 729 (PPQS…IAPT) and 731 to 826 (EPTH…IREI). The 94-residue stretch at 830-923 (PKIRLPRHLR…ATLRLRVVER (94 aa)) folds into the Ig-like C2-type 6 domain. The Fibronectin type-III 3 domain occupies 926–1022 (PPQAVRVMEV…HNTARIAKEG (97 aa)). Residues 1039-1132 (PQFLTPLVDR…ECRLDVRVPQ (94 aa)) form the Ig-like C2-type 7 domain.

It belongs to the immunoglobulin superfamily. MyBP family.

Thick filament-associated protein located in the crossbridge region of vertebrate striated muscle a bands. In vitro it binds MHC, F-actin and native thin filaments, and modifies the activity of actin-activated myosin ATPase. It may modulate muscle contraction or may play a more structural role. The polypeptide is Myosin-binding protein C, fast-type (MYBPC2) (Gallus gallus (Chicken)).